Consider the following 108-residue polypeptide: Universal stress protein Slr1101 (108 aa).

It belongs to the universal stress protein A family.

The sequence is that of Universal stress protein Slr1101 from Synechocystis sp. (strain ATCC 27184 / PCC 6803 / Kazusa).